Consider the following 272-residue polypeptide: Elongation factor Ts (272 aa).

Positions 76–79 (TDFV) are involved in Mg(2+) ion dislocation from EF-Tu.

Belongs to the EF-Ts family.

It localises to the cytoplasm. Its function is as follows. Associates with the EF-Tu.GDP complex and induces the exchange of GDP to GTP. It remains bound to the aminoacyl-tRNA.EF-Tu.GTP complex up to the GTP hydrolysis stage on the ribosome. The sequence is that of Elongation factor Ts from Corynebacterium urealyticum (strain ATCC 43042 / DSM 7109).